Reading from the N-terminus, the 141-residue chain is Large ribosomal subunit protein uL11A (141 aa).

It belongs to the universal ribosomal protein uL11 family. In terms of assembly, part of the ribosomal stalk of the 50S ribosomal subunit. Interacts with L10 and the large rRNA to form the base of the stalk. L10 forms an elongated spine to which L12 dimers bind in a sequential fashion forming a multimeric L10(L12)X complex. In terms of processing, one or more lysine residues are methylated.

Forms part of the ribosomal stalk which helps the ribosome interact with GTP-bound translation factors. The chain is Large ribosomal subunit protein uL11A from Halalkalibacterium halodurans (strain ATCC BAA-125 / DSM 18197 / FERM 7344 / JCM 9153 / C-125) (Bacillus halodurans).